Here is a 533-residue protein sequence, read N- to C-terminus: Adenosine deaminase (533 aa).

The first 19 residues, 1-19 (MKILLAVVFVLNLTNLAVP), serve as a signal peptide directing secretion.

Belongs to the metallo-dependent hydrolases superfamily. Adenosine and AMP deaminases family. ADGF subfamily. Zn(2+) serves as cofactor. Proteolytically cleaved by human mast cell tryptase and chymase. As to expression, female salivary gland (at protein level).

It localises to the secreted. The catalysed reaction is adenosine + H2O + H(+) = inosine + NH4(+). It catalyses the reaction 2'-deoxyadenosine + H2O + H(+) = 2'-deoxyinosine + NH4(+). In terms of biological role, catalyzes the deamination of adenosine to inosine and deoxyadenosine to deoxyinosine. Induces degranulation of host mast cells, and secretion of tryptase and IL6. Modulates enzymatic activities of human tryptase and chymase. Induces release of cytokines, such as IL1B, IL6, TNF, CCL2, IFN-beta (INFB1) and ISG15, from host monocytes and macrophages. Activates host NF-kappa-B signaling pathway in TAK1/MAP3K7-dependent manner. Its function is as follows. (Microbial infection) Promotes replication of dengue virus type 2 in host cells probably via modulation of cytokine production in host macrophages and monocytes. The protein is Adenosine deaminase of Aedes albopictus (Asian tiger mosquito).